We begin with the raw amino-acid sequence, 61 residues long: MKKLKITLVRSPIGYKYDQKDTVKRLGLRRMHYTVIKEDTPQIRGMVEKVKHLVKVEEVEE.

The protein belongs to the universal ribosomal protein uL30 family. In terms of assembly, part of the 50S ribosomal subunit.

This chain is Large ribosomal subunit protein uL30, found in Fervidobacterium nodosum (strain ATCC 35602 / DSM 5306 / Rt17-B1).